The primary structure comprises 253 residues: Tryptophan synthase alpha chain (253 aa).

Residues Glu48 and Asp59 each act as proton acceptor in the active site.

Belongs to the TrpA family. In terms of assembly, tetramer of two alpha and two beta chains.

It carries out the reaction (1S,2R)-1-C-(indol-3-yl)glycerol 3-phosphate + L-serine = D-glyceraldehyde 3-phosphate + L-tryptophan + H2O. It participates in amino-acid biosynthesis; L-tryptophan biosynthesis; L-tryptophan from chorismate: step 5/5. Its function is as follows. The alpha subunit is responsible for the aldol cleavage of indoleglycerol phosphate to indole and glyceraldehyde 3-phosphate. This chain is Tryptophan synthase alpha chain, found in Caldicellulosiruptor saccharolyticus (strain ATCC 43494 / DSM 8903 / Tp8T 6331).